The sequence spans 317 residues: Acetyl-coenzyme A carboxylase carboxyl transferase subunit alpha (317 aa).

A CoA carboxyltransferase C-terminal domain is found at 33–294 (NLDDEITRLQ…KKRLLADLAD (262 aa)).

This sequence belongs to the AccA family. Acetyl-CoA carboxylase is a heterohexamer composed of biotin carboxyl carrier protein (AccB), biotin carboxylase (AccC) and two subunits each of ACCase subunit alpha (AccA) and ACCase subunit beta (AccD).

It localises to the cytoplasm. The enzyme catalyses N(6)-carboxybiotinyl-L-lysyl-[protein] + acetyl-CoA = N(6)-biotinyl-L-lysyl-[protein] + malonyl-CoA. The protein operates within lipid metabolism; malonyl-CoA biosynthesis; malonyl-CoA from acetyl-CoA: step 1/1. Functionally, component of the acetyl coenzyme A carboxylase (ACC) complex. First, biotin carboxylase catalyzes the carboxylation of biotin on its carrier protein (BCCP) and then the CO(2) group is transferred by the carboxyltransferase to acetyl-CoA to form malonyl-CoA. The polypeptide is Acetyl-coenzyme A carboxylase carboxyl transferase subunit alpha (Histophilus somni (strain 129Pt) (Haemophilus somnus)).